The following is a 514-amino-acid chain: Na(+)/H(+) antiporter NhaB (514 aa).

12 consecutive transmembrane segments (helical) span residues 23–43 (LALL…SFVA), 52–72 (IFTL…LLAI), 97–117 (LLLM…LFIF), 120–140 (LLLS…AAAF), 144–164 (FLDA…FYGI), 202–222 (LMMH…VGEP), 238–258 (FFLR…LTCM), 303–323 (AIIG…VGLI), 357–377 (LTVF…APII), 391–411 (LFYL…VGTI), 447–467 (ATPN…APLI), and 475–495 (VWMA…CVEF).

Belongs to the NhaB Na(+)/H(+) (TC 2.A.34) antiporter family.

It is found in the cell inner membrane. The enzyme catalyses 2 Na(+)(in) + 3 H(+)(out) = 2 Na(+)(out) + 3 H(+)(in). Na(+)/H(+) antiporter that extrudes sodium in exchange for external protons. The protein is Na(+)/H(+) antiporter NhaB of Salmonella arizonae (strain ATCC BAA-731 / CDC346-86 / RSK2980).